We begin with the raw amino-acid sequence, 207 residues long: ADP-ribose pyrophosphatase (207 aa).

Substrate is bound by residues 37–38 (RE) and Arg64. The region spanning 41-172 (EHFGAVAIVA…EIVNSIAIAG (132 aa)) is the Nudix hydrolase domain. Ala76 serves as a coordination point for Mg(2+). The Nudix box signature appears at 77 to 99 (GLLDVAGEPPHLTAARELREEVG). Residue Leu78 coordinates substrate. The Mg(2+) site is built by Glu93 and Glu97. Substrate-binding positions include 114–116 (APG) and Glu120. Glu142 serves as a coordination point for Mg(2+). Glu142 serves as the catalytic Proton acceptor.

It belongs to the Nudix hydrolase family. Homodimer. Mg(2+) is required as a cofactor. Requires Mn(2+) as cofactor.

The enzyme catalyses ADP-D-ribose + H2O = D-ribose 5-phosphate + AMP + 2 H(+). The catalysed reaction is 8-oxo-dGDP + H2O = 8-oxo-dGMP + phosphate + H(+). It catalyses the reaction 8-oxo-GDP + H2O = 8-oxo-GMP + phosphate + H(+). Functionally, catalyzes the hydrolysis of ADP-ribose (ADPR) to AMP and ribose-5-phosphate. Can also hydrolyze ADP-mannose and ADP-glucose, with lower efficiency. Has weaker activity with NAD, GDP-sugars and UDP-sugars. Also catalyzes the conversion of 8-oxo-dGDP to 8-oxo-dGMP, and 8-oxo-GDP to 8-oxo-GMP. Functions in concert with MutT1 to detoxify 8-oxo-dGTP to 8-oxo-dGMP and may play an important role in supporting cellular growth under oxidative stress. The catalytic efficiency is much higher for the hydrolysis of ADPR than 8-oxo-dGTP, suggesting a more relevant biological role in hydrolysis of ADPR. The polypeptide is ADP-ribose pyrophosphatase (Mycobacterium tuberculosis (strain ATCC 25618 / H37Rv)).